The sequence spans 219 residues: Ran-binding protein 1 homolog c (219 aa).

The span at 1-11 (MASTEPERENR) shows a compositional bias: basic and acidic residues. Disordered regions lie at residues 1-30 (MAST…VAPI) and 160-219 (QVGK…EAST). A compositionally biased stretch (acidic residues) spans 12–23 (EDETEVNEDEDT). Residues 26 to 161 (QVAPIVRLEE…FTEIAESQQV (136 aa)) enclose the RanBD1 domain. The segment covering 185 to 219 (SEEKAKEAEEKEPAKEDKETKKEKVEEEKKTEAST) has biased composition (basic and acidic residues).

It is found in the nucleus. Its subcellular location is the nuclear pore complex. This Arabidopsis thaliana (Mouse-ear cress) protein is Ran-binding protein 1 homolog c (RANBP1C).